The sequence spans 469 residues: Transcription factor SOX-10 (469 aa).

Disordered stretches follow at residues 1–70 (MAEE…DDDK), 163–203 (LRMQ…QGGA), 215–278 (LDHR…DFGN), 357–378 (AQVKTETAGPQGPSHYSDQPST), and 436–469 (RPLYTAISDPSPSGPQSHSPTHWEQPVYTTLSRP). Residues 23–32 (LSPGSAPSLG) are compositionally biased toward low complexity. Phosphoserine is present on Ser-24. The span at 33-44 (PDGGGGGGGGSG) shows a compositional bias: gly residues. Residues 65–105 (EADDDKFPVCIREAVSQVLSGYDWTLVPMPVRVNGASKSKP) are dimerization (DIM). A DNA-binding region (HMG box) is located at residues 107–175 (VKRPMNAFMV…QHKKDHPDYK (69 aa)). Basic and acidic residues-rich tracts occupy residues 163-176 (LRMQHKKDHPDYKY) and 257-274 (ADPKRDGRSMGEGGKPHI). The segment at 231–313 (PEHPSGQSHG…LPPNGHPGHV (83 aa)) is transactivation domain (TAM). The tract at residues 356–469 (KAQVKTETAG…QPVYTTLSRP (114 aa)) is transactivation domain (TAC). Residues 443 to 469 (SDPSPSGPQSHSPTHWEQPVYTTLSRP) show a composition bias toward polar residues.

In terms of assembly, monomer. Interacts with ARMCX3 at the mitochondrial outer membrane surface. Interacts with PAX3.

Its subcellular location is the cytoplasm. It localises to the nucleus. It is found in the mitochondrion outer membrane. Functionally, transcription factor that plays a central role in developing and mature glia. Specifically activates expression of myelin genes, during oligodendrocyte (OL) maturation, such as DUSP15 and MYRF, thereby playing a central role in oligodendrocyte maturation and CNS myelination. Once induced, MYRF cooperates with SOX10 to implement the myelination program. Transcriptional activator of MITF, acting synergistically with PAX3. Transcriptional activator of MBP, via binding to the gene promoter. The chain is Transcription factor SOX-10 (SOX10) from Sus scrofa (Pig).